Here is a 162-residue protein sequence, read N- to C-terminus: uncharacterized protein (162 aa).

This is an uncharacterized protein from Bacillus subtilis (strain 168).